The following is a 274-amino-acid chain: Orotidine 5'-phosphate decarboxylase (274 aa).

Residue lysine 96 is the Proton donor of the active site.

This sequence belongs to the OMP decarboxylase family. Type 2 subfamily.

The enzyme catalyses orotidine 5'-phosphate + H(+) = UMP + CO2. It participates in pyrimidine metabolism; UMP biosynthesis via de novo pathway; UMP from orotate: step 2/2. In Bacteroides fragilis (strain YCH46), this protein is Orotidine 5'-phosphate decarboxylase.